We begin with the raw amino-acid sequence, 474 residues long: Proline--tRNA ligase (474 aa).

This sequence belongs to the class-II aminoacyl-tRNA synthetase family. ProS type 3 subfamily. As to quaternary structure, homodimer.

It is found in the cytoplasm. The catalysed reaction is tRNA(Pro) + L-proline + ATP = L-prolyl-tRNA(Pro) + AMP + diphosphate. Functionally, catalyzes the attachment of proline to tRNA(Pro) in a two-step reaction: proline is first activated by ATP to form Pro-AMP and then transferred to the acceptor end of tRNA(Pro). The polypeptide is Proline--tRNA ligase (Aster yellows witches'-broom phytoplasma (strain AYWB)).